A 200-amino-acid polypeptide reads, in one-letter code: Large ribosomal subunit protein uL4 (200 aa).

Residues 42 to 65 are disordered; sequence TRAHKSRADVSGGGKKPFRQKGTG.

This sequence belongs to the universal ribosomal protein uL4 family. In terms of assembly, part of the 50S ribosomal subunit.

Functionally, one of the primary rRNA binding proteins, this protein initially binds near the 5'-end of the 23S rRNA. It is important during the early stages of 50S assembly. It makes multiple contacts with different domains of the 23S rRNA in the assembled 50S subunit and ribosome. Forms part of the polypeptide exit tunnel. This chain is Large ribosomal subunit protein uL4, found in Acinetobacter baumannii (strain AB307-0294).